The chain runs to 60 residues: Large ribosomal subunit protein bL32A (60 aa).

Basic residues predominate over residues 1–19 (MAVPKRRMSRSNTRSRRSQ). The interval 1-21 (MAVPKRRMSRSNTRSRRSQWK) is disordered.

Belongs to the bacterial ribosomal protein bL32 family.

The polypeptide is Large ribosomal subunit protein bL32A (Nocardia farcinica (strain IFM 10152)).